The chain runs to 90 residues: Small ribosomal subunit protein bS20 (90 aa).

Belongs to the bacterial ribosomal protein bS20 family.

In terms of biological role, binds directly to 16S ribosomal RNA. This is Small ribosomal subunit protein bS20 from Acidiphilium cryptum (strain JF-5).